A 188-amino-acid polypeptide reads, in one-letter code: Pyridoxal 5'-phosphate synthase subunit PdxT (188 aa).

46 to 48 (GES) contributes to the L-glutamine binding site. C78 serves as the catalytic Nucleophile. L-glutamine is bound by residues R105 and 134 to 135 (IR). Catalysis depends on charge relay system residues H170 and E172.

The protein belongs to the glutaminase PdxT/SNO family. As to quaternary structure, in the presence of PdxS, forms a dodecamer of heterodimers. Only shows activity in the heterodimer.

It carries out the reaction aldehydo-D-ribose 5-phosphate + D-glyceraldehyde 3-phosphate + L-glutamine = pyridoxal 5'-phosphate + L-glutamate + phosphate + 3 H2O + H(+). The enzyme catalyses L-glutamine + H2O = L-glutamate + NH4(+). It participates in cofactor biosynthesis; pyridoxal 5'-phosphate biosynthesis. In terms of biological role, catalyzes the hydrolysis of glutamine to glutamate and ammonia as part of the biosynthesis of pyridoxal 5'-phosphate. The resulting ammonia molecule is channeled to the active site of PdxS. In Thermotoga maritima (strain ATCC 43589 / DSM 3109 / JCM 10099 / NBRC 100826 / MSB8), this protein is Pyridoxal 5'-phosphate synthase subunit PdxT.